The chain runs to 134 residues: Lymphocyte antigen 6G (134 aa).

The first 26 residues, 1-26, serve as a signal peptide directing secretion; that stretch reads MDTCHIAKSCVLILLVVLLCAERAQG. The UPAR/Ly6 domain occupies 27-118; that stretch reads LECYNCIGVP…PTGGSSWTMA (92 aa). 5 disulfides stabilise this stretch: cysteine 29–cysteine 53, cysteine 32–cysteine 41, cysteine 46–cysteine 74, cysteine 78–cysteine 98, and cysteine 99–cysteine 104. Asparagine 105 is lipidated: GPI-anchor amidated asparagine. The propeptide at 106-134 is removed in mature form; it reads AAVPTGGSSWTMAGVLLFSLVSVLLQTFL.

Expressed in bone marrow.

The protein localises to the cell membrane. The protein is Lymphocyte antigen 6G (Ly6g) of Mus musculus (Mouse).